A 122-amino-acid chain; its full sequence is MIQMQTNLDVADNSGARRVMCIKVLGGSKRKYAGVGDIIVVSVKEAIPRGRVKKGDVMKAVVVRTAKDIKRADGSVIRFDTNAAVLINNQSEPVGTRIFGPVPRELRAKNHMKIISLAPEVL.

It belongs to the universal ribosomal protein uL14 family. In terms of assembly, part of the 50S ribosomal subunit. Forms a cluster with proteins L3 and L19. In the 70S ribosome, L14 and L19 interact and together make contacts with the 16S rRNA in bridges B5 and B8.

In terms of biological role, binds to 23S rRNA. Forms part of two intersubunit bridges in the 70S ribosome. In Beijerinckia indica subsp. indica (strain ATCC 9039 / DSM 1715 / NCIMB 8712), this protein is Large ribosomal subunit protein uL14.